The chain runs to 695 residues: Phenoloxidase subunit 2 (695 aa).

Cu cation contacts are provided by H215, H219, and H245. The active-site Proton acceptor is the E353. Cu cation-binding residues include H368, H372, and H408. Intrachain disulfides connect C586-C630 and C588-C637.

As to quaternary structure, heterodimer. Forms a complex with an interleukin 1-like protein as a consequence of a host defense response. It depends on Cu(2+) as a cofactor. In terms of processing, the N-terminus is blocked. In terms of tissue distribution, synthesized by oenocytoids, a type of hemocyte, and released into the hemolymph plasma.

Its subcellular location is the secreted. The catalysed reaction is 2 L-dopa + O2 = 2 L-dopaquinone + 2 H2O. It catalyses the reaction L-tyrosine + O2 = L-dopaquinone + H2O. Activated by immulectin and lipopolysaccharide. In terms of biological role, this is a copper-containing oxidase that functions in the formation of pigments such as melanins and other polyphenolic compounds. Catalyzes the rate-limiting conversions of tyrosine to DOPA, DOPA to DOPA-quinone and possibly 5,6 dihydroxyindole to indole-5'6 quinone. Binds to the surface of hemocytes and is involved in hemocyte melanization. The polypeptide is Phenoloxidase subunit 2 (Manduca sexta (Tobacco hawkmoth)).